A 163-amino-acid polypeptide reads, in one-letter code: Cytochrome b6-f complex subunit 4 (163 aa).

3 helical membrane-spanning segments follow: residues 36–56, 95–115, and 131–151; these read LLYIFPVVILGTIACNVGLAV, LLGVLLMVSVPTGLLTVPFLE, and TVFLIGTAVALWLGIGATLPI.

It belongs to the cytochrome b family. PetD subfamily. As to quaternary structure, the 4 large subunits of the cytochrome b6-f complex are cytochrome b6, subunit IV (17 kDa polypeptide, petD), cytochrome f and the Rieske protein, while the 4 small subunits are petG, petL, petM and petN. The complex functions as a dimer.

It localises to the plastid. The protein resides in the chloroplast thylakoid membrane. In terms of biological role, component of the cytochrome b6-f complex, which mediates electron transfer between photosystem II (PSII) and photosystem I (PSI), cyclic electron flow around PSI, and state transitions. The protein is Cytochrome b6-f complex subunit 4 of Drimys granadensis.